The sequence spans 44 residues: Photosystem I reaction center subunit IX (44 aa).

The helical transmembrane segment at 7–27 threads the bilayer; sequence YLSVAPVISTLWFGSLAGLLI.

The protein belongs to the PsaJ family.

It localises to the plastid. It is found in the chloroplast thylakoid membrane. Its function is as follows. May help in the organization of the PsaE and PsaF subunits. The polypeptide is Photosystem I reaction center subunit IX (Populus alba (White poplar)).